The chain runs to 234 residues: ATP-dependent dethiobiotin synthetase BioD (234 aa).

Residue 12-17 coordinates ATP; it reads DVGKTF. T16 is a Mg(2+) binding site. K37 is a catalytic residue. S41 provides a ligand contact to substrate. ATP contacts are provided by residues D52, 118 to 121, and 178 to 179; these read EGAG and SQ. Residues D52 and E118 each coordinate Mg(2+).

Belongs to the dethiobiotin synthetase family. In terms of assembly, homodimer. Mg(2+) serves as cofactor.

It localises to the cytoplasm. It catalyses the reaction (7R,8S)-7,8-diammoniononanoate + CO2 + ATP = (4R,5S)-dethiobiotin + ADP + phosphate + 3 H(+). It participates in cofactor biosynthesis; biotin biosynthesis; biotin from 7,8-diaminononanoate: step 1/2. Catalyzes a mechanistically unusual reaction, the ATP-dependent insertion of CO2 between the N7 and N8 nitrogen atoms of 7,8-diaminopelargonic acid (DAPA, also called 7,8-diammoniononanoate) to form a ureido ring. In Phenylobacterium zucineum (strain HLK1), this protein is ATP-dependent dethiobiotin synthetase BioD.